Here is a 261-residue protein sequence, read N- to C-terminus: [LysW]-aminoadipate/[LysW]-glutamate kinase (261 aa).

Residues 35-36 (GG), arginine 62, and asparagine 166 contribute to the substrate site.

Belongs to the acetylglutamate kinase family. LysZ subfamily.

It localises to the cytoplasm. The catalysed reaction is [amino-group carrier protein]-C-terminal-N-(1,4-dicarboxybutan-1-yl)-L-glutamine + ATP = [amino-group carrier protein]-C-terminal-N-(1-carboxy-5-phosphooxy-5-oxopentan-1-yl)-L-glutamine + ADP. It catalyses the reaction [amino-group carrier protein]-C-terminal-gamma-(L-glutamyl)-L-glutamate + ATP = [amino-group carrier protein]-C-terminal-gamma-(5-phospho-L-glutamyl)-L-glutamate + ADP. It functions in the pathway amino-acid biosynthesis; L-lysine biosynthesis via AAA pathway; L-lysine from L-alpha-aminoadipate (Thermus route): step 2/5. Its pathway is amino-acid biosynthesis; L-arginine biosynthesis. Involved in both the arginine and lysine biosynthetic pathways. Phosphorylates the LysW-bound precursors glutamate (for arginine biosynthesis), respectively alpha-aminoadipate (for lysine biosynthesis). The protein is [LysW]-aminoadipate/[LysW]-glutamate kinase of Sulfolobus acidocaldarius (strain ATCC 33909 / DSM 639 / JCM 8929 / NBRC 15157 / NCIMB 11770).